The chain runs to 463 residues: Cysteine--tRNA ligase (463 aa).

Cys33 contributes to the Zn(2+) binding site. The short motif at 35-45 is the 'HIGH' region element; it reads PTVYDFAHIGN. Residues Cys221, His246, and Glu250 each coordinate Zn(2+). The 'KMSKS' region motif lies at 279–283; sequence KMSKS. Residue Lys282 coordinates ATP.

This sequence belongs to the class-I aminoacyl-tRNA synthetase family. Monomer. Zn(2+) is required as a cofactor.

Its subcellular location is the cytoplasm. It catalyses the reaction tRNA(Cys) + L-cysteine + ATP = L-cysteinyl-tRNA(Cys) + AMP + diphosphate. The sequence is that of Cysteine--tRNA ligase from Rhizobium leguminosarum bv. trifolii (strain WSM2304).